The primary structure comprises 364 residues: Acidic fibroblast growth factor intracellular-binding protein (364 aa).

An N-acetylthreonine modification is found at Thr2.

In terms of assembly, binds to internalized FGF1; this interaction is increased in the presence of CSNKB, suggesting a possible cooperative interaction between CSNKB and FIBP in binding to FGF1. In terms of tissue distribution, highly expressed in heart, skeletal muscle and pancreas. Expressed at lower levels in brain. Also found in placenta, liver and kidney.

Its subcellular location is the nucleus. It localises to the endomembrane system. In terms of biological role, may be involved in mitogenic function of FGF1. May mediate with IER2 FGF-signaling in the establishment of laterality in the embryo. This Homo sapiens (Human) protein is Acidic fibroblast growth factor intracellular-binding protein (FIBP).